The following is a 400-amino-acid chain: MAGATVTVEEVRKAQRATGPATVLAIGTATPANCVHQADYPDYYFRITKSEHMTDLKEKFKRMCDKSQIRKRYMHLTEEYLAENPNMCAYMAPSLDARQDIVVVEVPKLGKAAAQKAIKEWGQPKSKITHLVFCTTSGVDMPGADYQLTKMLGLRPSVNRLMMYQQGCFAGGTVLRVAKDLAENNRGARVLVVCSEITAVTFRGPSESHLDSMVGQALFGDGAAAVIVGADPDKRVECPLFQLVSASQTILPDSEGAIDGHLREVGLTFHLLKDVPGLISKNIERSLEEAFKPLGITDYNSIFWVAHPGGPAILDQVEAKVGLKKERMRATRHVLSEYGNMSSACVLFILDEMRKRSAEEGQATTGEGFDWGVLFGFGPGLTVETVVLHSVPITIAAITA.

Residue Cys168 is part of the active site.

Belongs to the thiolase-like superfamily. Chalcone/stilbene synthases family.

The catalysed reaction is (E)-4-coumaroyl-CoA + 3 malonyl-CoA + 3 H(+) = 2',4,4',6'-tetrahydroxychalcone + 3 CO2 + 4 CoA. It participates in secondary metabolite biosynthesis; flavonoid biosynthesis. Functionally, the primary product of this enzyme is 4,2',4',6'-tetrahydroxychalcone (also termed naringenin-chalcone or chalcone) which can under specific conditions spontaneously isomerize into naringenin. This is Chalcone synthase 7 (CHS7) from Sorghum bicolor (Sorghum).